Here is a 695-residue protein sequence, read N- to C-terminus: Elongation factor G 1 (695 aa).

Positions 6–281 (TRYRNIGIFA…AVVDYLPNPK (276 aa)) constitute a tr-type G domain. Residues 15 to 22 (AHVDAGKT), 79 to 83 (DTPGH), and 133 to 136 (NKLD) each bind GTP.

Belongs to the TRAFAC class translation factor GTPase superfamily. Classic translation factor GTPase family. EF-G/EF-2 subfamily.

The protein localises to the cytoplasm. Catalyzes the GTP-dependent ribosomal translocation step during translation elongation. During this step, the ribosome changes from the pre-translocational (PRE) to the post-translocational (POST) state as the newly formed A-site-bound peptidyl-tRNA and P-site-bound deacylated tRNA move to the P and E sites, respectively. Catalyzes the coordinated movement of the two tRNA molecules, the mRNA and conformational changes in the ribosome. The sequence is that of Elongation factor G 1 (fusA) from Synechocystis sp. (strain ATCC 27184 / PCC 6803 / Kazusa).